Reading from the N-terminus, the 266-residue chain is DNA primase (266 aa).

The disordered stretch occupies residues 244–266 (VTTTTTPSPPKIGSMQTTTKSTT). Over residues 257-266 (SMQTTTKSTT) the composition is skewed to polar residues.

The protein belongs to the baculoviridae LEF-1 family. Interacts with LEF-2.

Plays an essential role in viral DNA replication. May generates single-stranded DNA for both leading and lagging strand synthesis. The primase initiates primer synthesis and thereby produces large amount of short RNA primers on the lagging strand that the polymerase elongates using dNTPs. The chain is DNA primase (LEF-1) from Autographa californica nuclear polyhedrosis virus (AcMNPV).